Reading from the N-terminus, the 187-residue chain is Adenylate kinase (187 aa).

10 to 15 is an ATP binding site; it reads GSGKGT. The segment at 30–59 is NMP; sequence STGDMLRAEIAAGTELGKQAKTVMDAGNLV. AMP contacts are provided by residues threonine 31, arginine 36, 57–59, 85–88, and glutamine 92; these read NLV and GYPR. The segment at 126–136 is LID; sequence GRAKEQGRADD. Arginine 127 lines the ATP pocket. The AMP site is built by arginine 133 and arginine 144. Glycine 172 is an ATP binding site.

This sequence belongs to the adenylate kinase family. In terms of assembly, monomer.

The protein resides in the cytoplasm. It catalyses the reaction AMP + ATP = 2 ADP. The protein operates within purine metabolism; AMP biosynthesis via salvage pathway; AMP from ADP: step 1/1. Catalyzes the reversible transfer of the terminal phosphate group between ATP and AMP. Plays an important role in cellular energy homeostasis and in adenine nucleotide metabolism. This Stenotrophomonas maltophilia (strain K279a) protein is Adenylate kinase.